A 190-amino-acid chain; its full sequence is ATP synthase subunit delta (190 aa).

The protein belongs to the ATPase delta chain family. F-type ATPases have 2 components, F(1) - the catalytic core - and F(0) - the membrane proton channel. F(1) has five subunits: alpha(3), beta(3), gamma(1), delta(1), epsilon(1). F(0) has three main subunits: a(1), b(2) and c(10-14). The alpha and beta chains form an alternating ring which encloses part of the gamma chain. F(1) is attached to F(0) by a central stalk formed by the gamma and epsilon chains, while a peripheral stalk is formed by the delta and b chains.

The protein resides in the cell inner membrane. Its function is as follows. F(1)F(0) ATP synthase produces ATP from ADP in the presence of a proton or sodium gradient. F-type ATPases consist of two structural domains, F(1) containing the extramembraneous catalytic core and F(0) containing the membrane proton channel, linked together by a central stalk and a peripheral stalk. During catalysis, ATP synthesis in the catalytic domain of F(1) is coupled via a rotary mechanism of the central stalk subunits to proton translocation. In terms of biological role, this protein is part of the stalk that links CF(0) to CF(1). It either transmits conformational changes from CF(0) to CF(1) or is implicated in proton conduction. This Methylobacterium nodulans (strain LMG 21967 / CNCM I-2342 / ORS 2060) protein is ATP synthase subunit delta.